A 392-amino-acid chain; its full sequence is MIRYLTSGESHGPSLVAIVEGVPAGLALHPDDLNIHLQRRQQGYGRGNRMKIESDKAEILSGVRFGYTIGSPISFAIKNKDWANWTNKMNQFENPSEPVATIDIPRPGHADFSGRIKYGFNDIRPVIERSSARETAARVGACSISRKFLHDLGIEIGSYVSAIGQAFETEPNHHAVKILEKGAETLMHEADESPVRMLNKDLEKQAMELIDTAKKAGDTLGGIVEVFVTGLPIGLGSYVQYDRRLGADLGAAILSIQAVKGFEIGHAFKNAVSFGSEVHDEFYLDKNGNPQRKTNRAGGLEGGMTNGETLHLRVAMKPIATLMSPLSSFDFKTMSPAASHIERSDTCAVPACGVIAESVIAPVLANAILEKFGGDTINETKLRLDNYTQKGK.

Positions 40 and 46 each coordinate NADP(+). FMN is bound by residues 129–131 (RSS), 257–258 (QA), Gly-302, 317–321 (KPIAT), and Arg-343.

This sequence belongs to the chorismate synthase family. As to quaternary structure, homotetramer. Requires FMNH2 as cofactor.

The enzyme catalyses 5-O-(1-carboxyvinyl)-3-phosphoshikimate = chorismate + phosphate. Its pathway is metabolic intermediate biosynthesis; chorismate biosynthesis; chorismate from D-erythrose 4-phosphate and phosphoenolpyruvate: step 7/7. Its function is as follows. Catalyzes the anti-1,4-elimination of the C-3 phosphate and the C-6 proR hydrogen from 5-enolpyruvylshikimate-3-phosphate (EPSP) to yield chorismate, which is the branch point compound that serves as the starting substrate for the three terminal pathways of aromatic amino acid biosynthesis. This reaction introduces a second double bond into the aromatic ring system. This Chloroherpeton thalassium (strain ATCC 35110 / GB-78) protein is Chorismate synthase.